Consider the following 132-residue polypeptide: Small ribosomal subunit protein uS8c (132 aa).

Belongs to the universal ribosomal protein uS8 family. As to quaternary structure, part of the 30S ribosomal subunit.

It is found in the plastid. It localises to the chloroplast. Its function is as follows. One of the primary rRNA binding proteins, it binds directly to 16S rRNA central domain where it helps coordinate assembly of the platform of the 30S subunit. In Amborella trichopoda, this protein is Small ribosomal subunit protein uS8c (rps8).